The following is an 84-amino-acid chain: Small ribosomal subunit protein uS17 (84 aa).

The protein belongs to the universal ribosomal protein uS17 family. As to quaternary structure, part of the 30S ribosomal subunit.

One of the primary rRNA binding proteins, it binds specifically to the 5'-end of 16S ribosomal RNA. The sequence is that of Small ribosomal subunit protein uS17 from Citrobacter koseri (strain ATCC BAA-895 / CDC 4225-83 / SGSC4696).